Reading from the N-terminus, the 159-residue chain is Large ribosomal subunit protein bL17 (159 aa).

Low complexity predominate over residues 124–135 (EANRATRAAASK). Residues 124–159 (EANRATRAAASKQAEEAKAEEAEATEAEAEETTEEK) are disordered. Over residues 145 to 159 (AEATEAEAEETTEEK) the composition is skewed to acidic residues.

It belongs to the bacterial ribosomal protein bL17 family. As to quaternary structure, part of the 50S ribosomal subunit. Contacts protein L32.

The sequence is that of Large ribosomal subunit protein bL17 from Corynebacterium aurimucosum (strain ATCC 700975 / DSM 44827 / CIP 107346 / CN-1) (Corynebacterium nigricans).